The sequence spans 702 residues: Antigen peptide transporter 2 (702 aa).

At 1-6 (MALSYL) the chain is on the lumenal side. The chain crosses the membrane as a helical span at residues 7 to 27 (RPWVSLLLADMALLGLLQGSL). At 28–56 (GNLLPQGLPGLWIEGTLRLGVLWGLLKVG) the chain is on the cytoplasmic side. Residues 57 to 77 (ELLGLVGTLLPLLCLATPLFF) traverse the membrane as a helical segment. Residues 78-98 (SLRALVGGTASTSVVRVASAS) lie on the Lumenal side of the membrane. A helical membrane pass occupies residues 99–119 (WGWLLAGYGAVALSWAVWAVL). Over 120–147 (SPAGVQEKEPGQENRTLMKRLLKLSRPD) the chain is Cytoplasmic. A helical transmembrane segment spans residues 148-168 (LPFLIAAFFFLVVAVWGETLI). In terms of domain architecture, ABC transmembrane type-1 spans 151–434 (LIAAFFFLVV…LVYMYGDMLS (284 aa)). Topologically, residues 169-186 (PRYSGRVIDILGGDFDPD) are lumenal. Residues 187–207 (AFASAIFFMCLFSVGSSFSAG) traverse the membrane as a helical segment. The Cytoplasmic segment spans residues 208–265 (CRGGSFLFTMSRINLRIREQLFSSLLRQDLGFFQETKTGELNSRLSSDTSLMSRWLPF). A helical membrane pass occupies residues 266 to 286 (NANILLRSLVKVVGLYFFMLQ). Residues 287–292 (VSPRLT) lie on the Lumenal side of the membrane. The helical transmembrane segment at 293 to 313 (FLSLLDLPLTIAAEKVYNPRH) threads the bilayer. Residues 300-388 (PLTIAAEKVY…RRVMALGMQV (89 aa)) are part of the peptide-binding site. Residues 314-373 (QAVLKEIQDAVAKAGQVVREAVGGLQTVRSFGAEEQEVSHYKEALERCRQLWWRRDLEKD) lie on the Cytoplasmic side of the membrane. A helical transmembrane segment spans residues 374–394 (VYLVIRRVMALGMQVLILNCG). Over 395 to 407 (VQQILAGEVTRGG) the chain is Lumenal. The helical transmembrane segment at 408 to 428 (LLSFLLYQEEVGQYVRNLVYM) threads the bilayer. The interval 413-432 (LYQEEVGQYVRNLVYMYGDM) is part of the peptide-binding site. At 429–702 (YGDMLSNVGA…AHLVQQRLEA (274 aa)) the chain is on the cytoplasmic side. The 235-residue stretch at 467 to 701 (VEFQDVSFSY…YAHLVQQRLE (235 aa)) folds into the ABC transporter domain. Position 502 to 509 (502 to 509 (GPNGSGKS)) interacts with ATP.

This sequence belongs to the ABC transporter superfamily. ABCB family. MHC peptide exporter (TC 3.A.1.209) subfamily. In terms of assembly, heterodimer of TAP1 and TAP2 (TAP1-TAP2). A component of the peptide loading complex (PLC), interacts via TAPBP with MHCI heterodimer; this interaction mediates peptide-MHCI assembly. The cofactor is Mg(2+).

The protein resides in the endoplasmic reticulum membrane. The enzyme catalyses a peptide antigen(in) + ATP + H2O = a peptide antigen(out) + ADP + phosphate + H(+). Its function is as follows. ABC transporter associated with antigen processing. In complex with TAP1 mediates unidirectional translocation of peptide antigens from cytosol to endoplasmic reticulum (ER) for loading onto MHC class I (MHCI) molecules. Uses the chemical energy of ATP to export peptides against the concentration gradient. During the transport cycle alternates between 'inward-facing' state with peptide binding site facing the cytosol to 'outward-facing' state with peptide binding site facing the ER lumen. Peptide antigen binding to ATP-loaded TAP1-TAP2 induces a switch to hydrolysis-competent 'outward-facing' conformation ready for peptide loading onto nascent MHCI molecules. Subsequently ATP hydrolysis resets the transporter to the 'inward facing' state for a new cycle. As a component of the peptide loading complex (PLC), acts as a molecular scaffold essential for peptide-MHCI assembly and antigen presentation. This is Antigen peptide transporter 2 (Tap2) from Mus musculus (Mouse).